Reading from the N-terminus, the 308-residue chain is Ribosomal RNA large subunit methyltransferase F (308 aa).

The protein belongs to the methyltransferase superfamily. METTL16/RlmF family.

It is found in the cytoplasm. It catalyses the reaction adenosine(1618) in 23S rRNA + S-adenosyl-L-methionine = N(6)-methyladenosine(1618) in 23S rRNA + S-adenosyl-L-homocysteine + H(+). In terms of biological role, specifically methylates the adenine in position 1618 of 23S rRNA. This Escherichia coli O157:H7 protein is Ribosomal RNA large subunit methyltransferase F.